Reading from the N-terminus, the 423-residue chain is Glutamyl-tRNA reductase (423 aa).

Substrate-binding positions include 51–54 (TCNR), Ser99, 104–106 (EDQ), and Gln110. Residue Cys52 is the Nucleophile of the active site. Residue 179–184 (GSGEMG) participates in NADP(+) binding.

It belongs to the glutamyl-tRNA reductase family. Homodimer.

It catalyses the reaction (S)-4-amino-5-oxopentanoate + tRNA(Glu) + NADP(+) = L-glutamyl-tRNA(Glu) + NADPH + H(+). Its pathway is porphyrin-containing compound metabolism; protoporphyrin-IX biosynthesis; 5-aminolevulinate from L-glutamyl-tRNA(Glu): step 1/2. Functionally, catalyzes the NADPH-dependent reduction of glutamyl-tRNA(Glu) to glutamate 1-semialdehyde (GSA). The sequence is that of Glutamyl-tRNA reductase from Methanoculleus marisnigri (strain ATCC 35101 / DSM 1498 / JR1).